A 501-amino-acid polypeptide reads, in one-letter code: Protein MGF 505-4R (501 aa).

It belongs to the asfivirus MGF 505 family.

In terms of biological role, plays a role in virus cell tropism, and may be required for efficient virus replication in macrophages. This is Protein MGF 505-4R from African swine fever virus (isolate Tick/South Africa/Pretoriuskop Pr4/1996) (ASFV).